Consider the following 80-residue polypeptide: Protein FAM229B (80 aa).

The segment at 1-45 (MPFRFGTQPRRFPVEGGDSSIELESGLSSSASCTGKETSPNRQLR) is disordered. Residues 15 to 32 (EGGDSSIELESGLSSSAS) are compositionally biased toward low complexity. Positions 33–42 (CTGKETSPNR) are enriched in polar residues.

The protein belongs to the FAM229 family.

The protein is Protein FAM229B (Fam229b) of Mus musculus (Mouse).